The chain runs to 564 residues: Excitatory amino acid transporter 4 (564 aa).

Topologically, residues 1 to 55 (MSSHGNSLFLRESGQRLGRVGWLQRLQESLQQRALRTRLRLQTMTREHVLRFLRR) are cytoplasmic. Serine 2 is modified (phosphoserine). 3 consecutive transmembrane segments (helical) span residues 56–76 (NAFI…AFAL), 99–119 (MLQM…MASL), and 133–153 (VYYM…VTII). N-linked (GlcNAc...) asparagine glycans are attached at residues asparagine 216, asparagine 232, and asparagine 239. 3 helical membrane passes run 262-285 (SANG…IGGV), 295-322 (FFDS…LFLI), and 344-365 (LTVI…YFLI). Positions 371–401 (FPFIGGVLQALITAMGTSSSSATLPITFRCL) form an intramembrane region, discontinuously helical. 388-390 (SSS) contacts L-aspartate. Residues 411–437 (ITRFVLPVGATVNMDGTALYEALAAIF) traverse the membrane as a helical segment. Na(+)-binding residues include glycine 419, threonine 421, and asparagine 423. L-aspartate is bound by residues threonine 427, 468-472 (IPQAG), aspartate 501, and asparagine 508. The segment at residues 451–484 (ITTISITATAASVGAAGIPQAGLVTMVIVLTSVG) is an intramembrane region (discontinuously helical). The helical transmembrane segment at 498–519 (WFLDRLRTMTNVLGDSIGAAVI) threads the bilayer. Positions 508 and 512 each coordinate Na(+).

This sequence belongs to the dicarboxylate/amino acid:cation symporter (DAACS) (TC 2.A.23) family. SLC1A6 subfamily. Homotrimer. Detected in brain, cerebellum and hippocampus.

It localises to the cell membrane. It catalyses the reaction K(+)(in) + L-glutamate(out) + 3 Na(+)(out) + H(+)(out) = K(+)(out) + L-glutamate(in) + 3 Na(+)(in) + H(+)(in). The catalysed reaction is K(+)(in) + L-aspartate(out) + 3 Na(+)(out) + H(+)(out) = K(+)(out) + L-aspartate(in) + 3 Na(+)(in) + H(+)(in). It carries out the reaction D-aspartate(out) + K(+)(in) + 3 Na(+)(out) + H(+)(out) = D-aspartate(in) + K(+)(out) + 3 Na(+)(in) + H(+)(in). Its function is as follows. Sodium-dependent, high-affinity amino acid transporter that mediates the uptake of L-glutamate and also L-aspartate and D-aspartate. Functions as a symporter that transports one amino acid molecule together with two or three Na(+) ions and one proton, in parallel with the counter-transport of one K(+) ion. Mediates Cl(-) flux that is not coupled to amino acid transport; this avoids the accumulation of negative charges due to aspartate and Na(+) symport. Plays a redundant role in the rapid removal of released glutamate from the synaptic cleft, which is essential for terminating the postsynaptic action of glutamate. The polypeptide is Excitatory amino acid transporter 4 (SLC1A6) (Canis lupus familiaris (Dog)).